We begin with the raw amino-acid sequence, 310 residues long: Ribosomal RNA large subunit methyltransferase F (310 aa).

It belongs to the methyltransferase superfamily. METTL16/RlmF family.

It localises to the cytoplasm. The catalysed reaction is adenosine(1618) in 23S rRNA + S-adenosyl-L-methionine = N(6)-methyladenosine(1618) in 23S rRNA + S-adenosyl-L-homocysteine + H(+). Specifically methylates the adenine in position 1618 of 23S rRNA. This is Ribosomal RNA large subunit methyltransferase F from Pseudoalteromonas translucida (strain TAC 125).